The chain runs to 85 residues: Small ribosomal subunit protein bS18 (85 aa).

This sequence belongs to the bacterial ribosomal protein bS18 family. In terms of assembly, part of the 30S ribosomal subunit. Forms a tight heterodimer with protein bS6.

Its function is as follows. Binds as a heterodimer with protein bS6 to the central domain of the 16S rRNA, where it helps stabilize the platform of the 30S subunit. This Helicobacter pylori (strain Shi470) protein is Small ribosomal subunit protein bS18.